Here is a 336-residue protein sequence, read N- to C-terminus: Ribose-phosphate pyrophosphokinase (336 aa).

ATP-binding positions include 43-45 (DQE) and 102-103 (RQ). Residues histidine 136 and aspartate 178 each coordinate Mg(2+). Lysine 201 is a catalytic residue. D-ribose 5-phosphate contacts are provided by residues arginine 203, aspartate 227, and 231-235 (DTAGT).

Belongs to the ribose-phosphate pyrophosphokinase family. Class I subfamily. Homohexamer. The cofactor is Mg(2+).

Its subcellular location is the cytoplasm. The enzyme catalyses D-ribose 5-phosphate + ATP = 5-phospho-alpha-D-ribose 1-diphosphate + AMP + H(+). The protein operates within metabolic intermediate biosynthesis; 5-phospho-alpha-D-ribose 1-diphosphate biosynthesis; 5-phospho-alpha-D-ribose 1-diphosphate from D-ribose 5-phosphate (route I): step 1/1. In terms of biological role, involved in the biosynthesis of the central metabolite phospho-alpha-D-ribosyl-1-pyrophosphate (PRPP) via the transfer of pyrophosphoryl group from ATP to 1-hydroxyl of ribose-5-phosphate (Rib-5-P). The sequence is that of Ribose-phosphate pyrophosphokinase from Cereibacter sphaeroides (strain KD131 / KCTC 12085) (Rhodobacter sphaeroides).